Reading from the N-terminus, the 160-residue chain is MPSFDVVSEVDTHELTNAIDQANRELATRFDFKGVDAKFEREGDVINQTAPTEFQLKQMNDILRARLAARGIDVLSLEFGDIETNLAQARQKITVKQGIEQKIAKKIAAALKDAKLKVESQINGDKLRVQGKKRDDLQDAIAVLKAGKFELPLQFNNFRD.

Belongs to the YajQ family.

Nucleotide-binding protein. This is Nucleotide-binding protein Smal_3487 from Stenotrophomonas maltophilia (strain R551-3).